Here is a 228-residue protein sequence, read N- to C-terminus: Cytidylate kinase (228 aa).

An ATP-binding site is contributed by 17–25 (GPSASGKGT).

Belongs to the cytidylate kinase family. Type 1 subfamily.

Its subcellular location is the cytoplasm. It catalyses the reaction CMP + ATP = CDP + ADP. It carries out the reaction dCMP + ATP = dCDP + ADP. This chain is Cytidylate kinase, found in Paraburkholderia phytofirmans (strain DSM 17436 / LMG 22146 / PsJN) (Burkholderia phytofirmans).